Here is a 469-residue protein sequence, read N- to C-terminus: 3-isopropylmalate dehydratase large subunit (469 aa).

Residues C347, C407, and C410 each contribute to the [4Fe-4S] cluster site. Residues 424–441 (SASSSNRNFKGRQGSPSG) show a composition bias toward polar residues. The interval 424 to 443 (SASSSNRNFKGRQGSPSGRT) is disordered.

This sequence belongs to the aconitase/IPM isomerase family. LeuC type 1 subfamily. As to quaternary structure, heterodimer of LeuC and LeuD. [4Fe-4S] cluster serves as cofactor.

It catalyses the reaction (2R,3S)-3-isopropylmalate = (2S)-2-isopropylmalate. Its pathway is amino-acid biosynthesis; L-leucine biosynthesis; L-leucine from 3-methyl-2-oxobutanoate: step 2/4. Its function is as follows. Catalyzes the isomerization between 2-isopropylmalate and 3-isopropylmalate, via the formation of 2-isopropylmaleate. The sequence is that of 3-isopropylmalate dehydratase large subunit from Prochlorococcus marinus (strain MIT 9312).